The primary structure comprises 203 residues: Small ribosomal subunit protein uS4 (203 aa).

The S4 RNA-binding domain occupies 93–156 (RRLDNVVYRL…LKVPAILEAV (64 aa)).

Belongs to the universal ribosomal protein uS4 family. Part of the 30S ribosomal subunit. Contacts protein S5. The interaction surface between S4 and S5 is involved in control of translational fidelity.

Functionally, one of the primary rRNA binding proteins, it binds directly to 16S rRNA where it nucleates assembly of the body of the 30S subunit. With S5 and S12 plays an important role in translational accuracy. This chain is Small ribosomal subunit protein uS4, found in Streptococcus sanguinis (strain SK36).